We begin with the raw amino-acid sequence, 224 residues long: Cytochrome c oxidase subunit 2 (224 aa).

The Mitochondrial intermembrane segment spans residues Met1–His26. A helical membrane pass occupies residues Ala27–Asn48. Residues Thr49 to Glu62 lie on the Mitochondrial matrix side of the membrane. Residues Thr63–Arg82 traverse the membrane as a helical segment. Topologically, residues Leu83–Asn224 are mitochondrial intermembrane. 6 residues coordinate Cu cation: His161, Cys196, Glu198, Cys200, His204, and Met207. Glu198 is a binding site for Mg(2+).

It belongs to the cytochrome c oxidase subunit 2 family. In terms of assembly, component of the cytochrome c oxidase (complex IV, CIV), a multisubunit enzyme composed of a catalytic core of 3 subunits and several supernumerary subunits. The complex exists as a monomer or a dimer and forms supercomplexes (SCs) in the inner mitochondrial membrane with ubiquinol-cytochrome c oxidoreductase (cytochrome b-c1 complex, complex III, CIII). Requires Cu cation as cofactor.

Its subcellular location is the mitochondrion inner membrane. It carries out the reaction 4 Fe(II)-[cytochrome c] + O2 + 8 H(+)(in) = 4 Fe(III)-[cytochrome c] + 2 H2O + 4 H(+)(out). Functionally, component of the cytochrome c oxidase, the last enzyme in the mitochondrial electron transport chain which drives oxidative phosphorylation. The respiratory chain contains 3 multisubunit complexes succinate dehydrogenase (complex II, CII), ubiquinol-cytochrome c oxidoreductase (cytochrome b-c1 complex, complex III, CIII) and cytochrome c oxidase (complex IV, CIV), that cooperate to transfer electrons derived from NADH and succinate to molecular oxygen, creating an electrochemical gradient over the inner membrane that drives transmembrane transport and the ATP synthase. Cytochrome c oxidase is the component of the respiratory chain that catalyzes the reduction of oxygen to water. Electrons originating from reduced cytochrome c in the intermembrane space (IMS) are transferred via the dinuclear copper A center (CU(A)) of subunit 2 and heme A of subunit 1 to the active site in subunit 1, a binuclear center (BNC) formed by heme A3 and copper B (CU(B)). The BNC reduces molecular oxygen to 2 water molecules using 4 electrons from cytochrome c in the IMS and 4 protons from the mitochondrial matrix. In Albinaria turrita (Door snail), this protein is Cytochrome c oxidase subunit 2 (COII).